A 268-amino-acid chain; its full sequence is MERYESLFTQLKERKEGAFVPFVTLGDPGIEQSLKIIDTLIEAGADALELGIPFSDPLADGPTIQNATLRAFAAGVTPAQCFEVLALIRQKHPTIPIGLLMYANLVFNKGIDEFYAECEKVGVDSVLVADVPVEESAPFRQAALRHNVAPIFICPPNADDDLLRQIASYGRGYTYLLSRAGVTGAENRAALPLNHLVAKLKEYNAAPPLQGFGISAPDQVKAAIDAGAAGAISGSAIVKIIEQHINEPEKMLAALKAFVQPMKAATRS.

Catalysis depends on proton acceptor residues Glu49 and Asp60.

This sequence belongs to the TrpA family. In terms of assembly, tetramer of two alpha and two beta chains.

The catalysed reaction is (1S,2R)-1-C-(indol-3-yl)glycerol 3-phosphate + L-serine = D-glyceraldehyde 3-phosphate + L-tryptophan + H2O. The protein operates within amino-acid biosynthesis; L-tryptophan biosynthesis; L-tryptophan from chorismate: step 5/5. The alpha subunit is responsible for the aldol cleavage of indoleglycerol phosphate to indole and glyceraldehyde 3-phosphate. The sequence is that of Tryptophan synthase alpha chain from Escherichia coli O1:K1 / APEC.